We begin with the raw amino-acid sequence, 119 residues long: Ribonuclease P protein component (119 aa).

The tract at residues 1-20 (MLPAQHRMTRSTEFGATVSK) is disordered.

This sequence belongs to the RnpA family. As to quaternary structure, consists of a catalytic RNA component (M1 or rnpB) and a protein subunit.

It catalyses the reaction Endonucleolytic cleavage of RNA, removing 5'-extranucleotides from tRNA precursor.. Its function is as follows. RNaseP catalyzes the removal of the 5'-leader sequence from pre-tRNA to produce the mature 5'-terminus. It can also cleave other RNA substrates such as 4.5S RNA. The protein component plays an auxiliary but essential role in vivo by binding to the 5'-leader sequence and broadening the substrate specificity of the ribozyme. This chain is Ribonuclease P protein component, found in Mycolicibacterium vanbaalenii (strain DSM 7251 / JCM 13017 / BCRC 16820 / KCTC 9966 / NRRL B-24157 / PYR-1) (Mycobacterium vanbaalenii).